A 150-amino-acid chain; its full sequence is Arginine repressor (150 aa).

The protein belongs to the ArgR family.

Its subcellular location is the cytoplasm. Its pathway is amino-acid biosynthesis; L-arginine biosynthesis [regulation]. Functionally, regulates arginine biosynthesis genes. The polypeptide is Arginine repressor (Staphylococcus epidermidis (strain ATCC 35984 / DSM 28319 / BCRC 17069 / CCUG 31568 / BM 3577 / RP62A)).